The sequence spans 620 residues: 1-deoxy-D-xylulose-5-phosphate synthase (620 aa).

Thiamine diphosphate-binding positions include histidine 75 and 116-118; that span reads AHS. Aspartate 147 is a binding site for Mg(2+). Thiamine diphosphate is bound by residues 148 to 149, asparagine 177, tyrosine 284, and glutamate 366; that span reads GA. Asparagine 177 is a Mg(2+) binding site.

This sequence belongs to the transketolase family. DXPS subfamily. In terms of assembly, homodimer. Mg(2+) is required as a cofactor. It depends on thiamine diphosphate as a cofactor.

The enzyme catalyses D-glyceraldehyde 3-phosphate + pyruvate + H(+) = 1-deoxy-D-xylulose 5-phosphate + CO2. It functions in the pathway metabolic intermediate biosynthesis; 1-deoxy-D-xylulose 5-phosphate biosynthesis; 1-deoxy-D-xylulose 5-phosphate from D-glyceraldehyde 3-phosphate and pyruvate: step 1/1. Its function is as follows. Catalyzes the acyloin condensation reaction between C atoms 2 and 3 of pyruvate and glyceraldehyde 3-phosphate to yield 1-deoxy-D-xylulose-5-phosphate (DXP). The polypeptide is 1-deoxy-D-xylulose-5-phosphate synthase (Bordetella bronchiseptica (strain ATCC BAA-588 / NCTC 13252 / RB50) (Alcaligenes bronchisepticus)).